Here is a 373-residue protein sequence, read N- to C-terminus: Queuine tRNA-ribosyltransferase (373 aa).

Asp90 (proton acceptor) is an active-site residue. Substrate contacts are provided by residues Asp90–Phe94, Asp144, Gln193, and Gly220. Residues Gly251–Asp257 are RNA binding. The active-site Nucleophile is the Asp270. The tract at residues Thr275 to Arg279 is RNA binding; important for wobble base 34 recognition. Cys308, Cys310, Cys313, and His339 together coordinate Zn(2+).

This sequence belongs to the queuine tRNA-ribosyltransferase family. As to quaternary structure, homodimer. Within each dimer, one monomer is responsible for RNA recognition and catalysis, while the other monomer binds to the replacement base PreQ1. The cofactor is Zn(2+).

The enzyme catalyses 7-aminomethyl-7-carbaguanine + guanosine(34) in tRNA = 7-aminomethyl-7-carbaguanosine(34) in tRNA + guanine. Its pathway is tRNA modification; tRNA-queuosine biosynthesis. Its function is as follows. Catalyzes the base-exchange of a guanine (G) residue with the queuine precursor 7-aminomethyl-7-deazaguanine (PreQ1) at position 34 (anticodon wobble position) in tRNAs with GU(N) anticodons (tRNA-Asp, -Asn, -His and -Tyr). Catalysis occurs through a double-displacement mechanism. The nucleophile active site attacks the C1' of nucleotide 34 to detach the guanine base from the RNA, forming a covalent enzyme-RNA intermediate. The proton acceptor active site deprotonates the incoming PreQ1, allowing a nucleophilic attack on the C1' of the ribose to form the product. After dissociation, two additional enzymatic reactions on the tRNA convert PreQ1 to queuine (Q), resulting in the hypermodified nucleoside queuosine (7-(((4,5-cis-dihydroxy-2-cyclopenten-1-yl)amino)methyl)-7-deazaguanosine). The polypeptide is Queuine tRNA-ribosyltransferase (Campylobacter jejuni subsp. doylei (strain ATCC BAA-1458 / RM4099 / 269.97)).